Reading from the N-terminus, the 438-residue chain is L-fucose-proton symporter (438 aa).

Residues Gly-2–Ile-26 are Cytoplasmic-facing. The helical transmembrane segment at Pro-27–Gln-53 threads the bilayer. Over Gln-54–Phe-61 the chain is Periplasmic. The helical transmembrane segment at Gln-62–Lys-87 threads the bilayer. Over Leu-88 to Tyr-90 the chain is Cytoplasmic. A helical transmembrane segment spans residues Lys-91–Glu-113. Residues Ile-114 to Tyr-117 lie on the Periplasmic side of the membrane. Residues Thr-118 to Val-144 form a helical membrane-spanning segment. Residues Leu-145–Ser-150 are Cytoplasmic-facing. Residues Gly-151–Leu-178 traverse the membrane as a helical segment. Residues Ser-179–Ser-193 lie on the Periplasmic side of the membrane. Residues Pro-194–Met-227 form a helical membrane-spanning segment. The Cytoplasmic segment spans residues Leu-228–Ile-257. Residues Arg-258 to Glu-287 traverse the membrane as a helical segment. At Glu-288–Thr-293 the chain is on the periplasmic side. A helical membrane pass occupies residues Ala-294 to Ile-319. Residues Ser-320–Pro-324 are Cytoplasmic-facing. Residues His-325–Ala-343 form a helical membrane-spanning segment. At Phe-344 to Gly-347 the chain is on the periplasmic side. Residues His-348–Gly-372 traverse the membrane as a helical segment. The Cytoplasmic portion of the chain corresponds to Ile-373–Asp-379. Residues Thr-380–Ala-407 form a helical membrane-spanning segment. Topologically, residues Ala-408–Asn-410 are periplasmic. A helical membrane pass occupies residues Ile-411–Arg-430. Residues Phe-431–Asn-438 lie on the Cytoplasmic side of the membrane.

The protein belongs to the major facilitator superfamily. FHS transporter (TC 2.A.1.7) family.

It localises to the cell inner membrane. It carries out the reaction L-fucose(in) + H(+)(in) = L-fucose(out) + H(+)(out). The enzyme catalyses D-arabinose(out) + H(+)(out) = D-arabinose(in) + H(+)(in). The catalysed reaction is L-galactose(out) + H(+)(out) = L-galactose(in) + H(+)(in). Its function is as follows. Mediates the uptake of L-fucose across the boundary membrane with the concomitant transport of protons into the cell (symport system). Can also transport L-galactose and D-arabinose, but at reduced rates compared with L-fucose. Is not able to transport L-rhamnose and L-arabinose. Binds D-arabinose with the highest affinity, followed by L-fucose, and then by L-galactose. The protein is L-fucose-proton symporter (fucP) of Escherichia coli (strain K12).